Consider the following 447-residue polypeptide: Phosphoglucosamine mutase (447 aa).

S100 (phosphoserine intermediate) is an active-site residue. Residues S100, D239, D241, and D243 each coordinate Mg(2+). S100 bears the Phosphoserine mark.

Belongs to the phosphohexose mutase family. Mg(2+) serves as cofactor. Activated by phosphorylation.

The catalysed reaction is alpha-D-glucosamine 1-phosphate = D-glucosamine 6-phosphate. Its function is as follows. Catalyzes the conversion of glucosamine-6-phosphate to glucosamine-1-phosphate. This is Phosphoglucosamine mutase from Thermoanaerobacter sp. (strain X514).